We begin with the raw amino-acid sequence, 423 residues long: Core protease OPG082 (423 aa).

Residues His-241, Asp-248, and Cys-328 contribute to the active site.

It belongs to the peptidase C57 family.

Its subcellular location is the virion. Its function is as follows. Late protein responsible for processing most or all of the viral core and membrane proteins known to undergo morphogenesis-associated proteolysis. These proteolytic events are involved in the transformation of immature virions (IV) into mature virions (MV). Probably cleaves at least the OPG129, OPG136, OPG098, and OPG144 precursors preferentially at Ala-Gly-|-Ala motifs. Also seems to process Ala-Gly-|-Ser and Ala-Gly-|-Thr motifs. This chain is Core protease OPG082 (OPG083), found in Homo sapiens (Human).